We begin with the raw amino-acid sequence, 136 residues long: Histone H3.2 (136 aa).

The tract at residues 1–20 is disordered; it reads MARTKQTARKSTGGKAPRKQ. Lys5 is modified (N6-methylated lysine). The residue at position 10 (Lys10) is an N6-acetyllysine; alternate. Residue Lys10 is modified to N6-methylated lysine; alternate. Phosphoserine is present on Ser11. The residue at position 12 (Thr12) is a Phosphothreonine. The residue at position 15 (Lys15) is an N6-acetyllysine. 2 positions are modified to N6-acetyllysine; alternate: Lys19 and Lys24. Residues Lys19 and Lys24 each carry the N6-methylated lysine; alternate modification. Position 37 is an N6-methylated lysine (Lys37).

This sequence belongs to the histone H3 family. The nucleosome is a histone octamer containing two molecules each of H2A, H2B, H3 and H4 assembled in one H3-H4 heterotetramer and two H2A-H2B heterodimers. The octamer wraps approximately 147 bp of DNA. Post-translationally, acetylation is generally linked to gene activation. Can be acetylated to form H3K9ac, H3K14ac, H3K18ac and H3K23ac. H3K9ac could compete with H3K9me and prevent gene silencing. H3K9ac is restricted to euchromatin. Methylated to form mainly H3K4me, H3K9me, H3K18me, H3K23me and H3K36me. H3K4me1/2/3, H3K9me3 and H3K36me1/2/3 are typical marks for euchromatin, whereas heterochromatic chromocenters are enriched in H3K9me1/2. H2BK143ub1 is probably prerequisite for H3K4me. In terms of processing, can be phosphorylated to form H3S10ph and H3T11ph.

Its subcellular location is the nucleus. The protein localises to the chromosome. Core component of nucleosome. Nucleosomes wrap and compact DNA into chromatin, limiting DNA accessibility to the cellular machineries which require DNA as a template. Histones thereby play a central role in transcription regulation, DNA repair, DNA replication and chromosomal stability. DNA accessibility is regulated via a complex set of post-translational modifications of histones, also called histone code, and nucleosome remodeling. The chain is Histone H3.2 from Cichorium intybus (Chicory).